The primary structure comprises 462 residues: MFASIKDILENPILNSNVTINGWIRTKRSNGKIGFIEINDGSTLKGIQAVINEEENQFDEKDLKNLTTGASISLTGLLVESPAKGQNYEIKTCGFNVIGEADPKTYPLQKKRHTFEFLREIPHLRIRTNTFGAVARVRSKISYKIHEYFQKNGFFYINTPIITSNDGEGAGEMFRVSTLKFNKPNNDLGNIDFKDDFFGKEAFLSVTGQLHGEAYAMALSKIYTFGPTFRAENSNTTRHASEFWMIEPEMAFYKLNDNITLAEDLLKYLLSSILNECSQDMDFLENYIEKGLIKKLENVINSNFEVITYTKAIEILESSKKNFEIKPYWGIDLQTEHERFLTEETFKKPVVVIDYPKNFKAFYMKINKDNKTVKGMDVLVPKIGEIIGGSEREDNLQKLENRIKELNLSIEHLNWYLDLRRFGSTPHSGFGLGLERFVQYSTGISNIRDSIPFPRTPKNLYF.

The protein belongs to the class-II aminoacyl-tRNA synthetase family. In terms of assembly, homodimer.

The protein resides in the cytoplasm. It carries out the reaction tRNA(Asn) + L-asparagine + ATP = L-asparaginyl-tRNA(Asn) + AMP + diphosphate + H(+). This is Asparagine--tRNA ligase from Borreliella afzelii (strain PKo) (Borrelia afzelii).